Here is a 437-residue protein sequence, read N- to C-terminus: MADYKVKDISLAEWGRKAIELAENEMPGLMELRREYGPSQPLKGAKIAGCLHMTVQTAVLIETLKALGADVRWSSCNIFSTQDNAAAAIAKAGVPVFAWKGETDEEYEWCIAQTVKGFSGDGLPNMILDDGGDLTNLVIDHHPELVPKIFGISEETTTGVKNLYKRLSKGNLPMCAINVNDSVTKSKFDNLYGCRESLVDGMKRATDVMIAGKTCCVCGYGDVGKGCAAALRAFGARVVVTEVDPINALQASMEGYQVALVEDVMADAHIFVTTTGNDDIITSEHFPHMRDDAIVCNIGHFDTEIQVGWLEANAKEHVEIKPQVDRYTMENGRHIILLAKGRLVNLGCASGHPSFVMSNSFTNQVLAQIELWSNRDNGKYPRGDKAGVFFLPKALDEKVAALHLAHVGAKLTKLTPKQAEYINCPVNGPFKPDHYRY.

3 residues coordinate substrate: threonine 54, aspartate 130, and glutamate 155. NAD(+) is bound at residue 156-158 (TTT). Substrate-binding residues include lysine 185 and aspartate 189. NAD(+) contacts are provided by residues asparagine 190, 219 to 224 (GYGDVG), glutamate 242, asparagine 277, 298 to 300 (IGH), and asparagine 345.

This sequence belongs to the adenosylhomocysteinase family. As to quaternary structure, homotetramer. It depends on NAD(+) as a cofactor.

Its subcellular location is the cytoplasm. The enzyme catalyses S-adenosyl-L-homocysteine + H2O = L-homocysteine + adenosine. It functions in the pathway amino-acid biosynthesis; L-homocysteine biosynthesis; L-homocysteine from S-adenosyl-L-homocysteine: step 1/1. Functionally, adenosylhomocysteine is a competitive inhibitor of S-adenosyl-L-methionine-dependent methyl transferase reactions; therefore adenosylhomocysteinase may play a key role in the control of methylations via regulation of the intracellular concentration of adenosylhomocysteine. This chain is Adenosylhomocysteinase, found in Leishmania donovani.